The primary structure comprises 60 residues: Large ribosomal subunit protein uL30 (60 aa).

The protein belongs to the universal ribosomal protein uL30 family. In terms of assembly, part of the 50S ribosomal subunit.

The polypeptide is Large ribosomal subunit protein uL30 (Shewanella loihica (strain ATCC BAA-1088 / PV-4)).